The sequence spans 600 residues: ATP-dependent ubiquitin transferase-like protein Cap2 (600 aa).

The segment at 1–158 is E2-like domain; it reads MSTVVQQVPA…QEKLATTGDA (158 aa). The For E2-like domain role is filled by Cys-109. Residues 159 to 373 are linker domain; the sequence is VELPAFPDQS…DQLRTRGEAA (215 aa). The interval 375–600 is adenylation plus E1-like domain; that stretch reads DIRSKKVLII…GTVEKEPHEY (226 aa). Cys-548 serves as the catalytic For E1-like domain.

It in the C-terminal section; belongs to the HesA/MoeB/ThiF family. As to quaternary structure, crystallizes as a Cap2 homodimer bound on each side by a CdnD monomer.

Functionally, CD-NTase priming component of a CBASS antiviral system. CBASS (cyclic oligonucleotide-based antiphage signaling system) provides immunity against bacteriophages. The CD-NTase protein (CdnD) synthesizes cyclic nucleotides in response to infection; these serve as specific second messenger signals. The signals activate a diverse range of effectors, leading to bacterial cell death and thus abortive phage infection. A type II-C(AAG) CBASS system. In terms of biological role, primes CdnD; acts as a protein transferase, conjugating CdnD, the CD-NTase, to unidentified target(s) in the cell via an E1-E2 ubiquitin transferase-like mechanism. Upon phage infection CdnD activates and makes cyclic nucleotides. During the conjugation reaction CdnD is transiently attached to AMP. Protein conjugation requires ATP. Protects E.coli against phage T2 infection. When the cdnD-cap2-cap3-cap4 operon is introduced in E.coli there is a more than 10(3) decrease in the efficiency of T2 plaque formation. The operon does not protect against phage T5 and only about 10-fold against T7. The protein is ATP-dependent ubiquitin transferase-like protein Cap2 of Enterobacter hormaechei subsp. hoffmannii (strain UCI 50).